Here is a 191-residue protein sequence, read N- to C-terminus: UPF0312 protein Shew185_3055 (191 aa).

An N-terminal signal peptide occupies residues 1–22 (MKKQLLSALIGASLLAPMAASA).

This sequence belongs to the UPF0312 family. Type 1 subfamily.

It is found in the periplasm. This is UPF0312 protein Shew185_3055 from Shewanella baltica (strain OS185).